Here is a 683-residue protein sequence, read N- to C-terminus: Cytoskeleton-associated protein 2 (683 aa).

2 disordered regions span residues 1-28 and 153-175; these read MSTPAVPQDLQLPPSQRAQSAFKEQRRQ and NSKKKQMTTEKQKQDANMPKKPV. Residues S178 and S190 each carry the phosphoserine modification. Disordered stretches follow at residues 214-236 and 336-403; these read KATKPQPVNTSSVTVKSNRSSNM and EKSE…EKPV. The span at 219–236 shows a compositional bias: polar residues; that stretch reads QPVNTSSVTVKSNRSSNM. 2 stretches are compositionally biased toward basic and acidic residues: residues 336–345 and 362–376; these read EKSEPVDQRR and ETSEERKARLSEWKA. S534 carries the phosphoserine modification. T579 and T582 each carry phosphothreonine. Phosphoserine is present on S595. Phosphothreonine occurs at positions 596 and 597. Y599 carries the post-translational modification Phosphotyrosine. Phosphoserine is present on S602.

It belongs to the CKAP2 family. Associates with alpha- and beta-tubulins. As to expression, abundant in testis, thymus, and in tumor derived cell lines, while barely detectable in liver, prostate, and kidney.

It is found in the cytoplasm. The protein localises to the cytoskeleton. Its subcellular location is the spindle. The protein resides in the spindle pole. Possesses microtubule stabilizing properties. Involved in regulating aneuploidy, cell cycling, and cell death in a p53/TP53-dependent manner. In Homo sapiens (Human), this protein is Cytoskeleton-associated protein 2.